The sequence spans 344 residues: Centromere protein L (344 aa).

The residue at position 39 (serine 39) is a Phosphoserine. Threonine 43 is subject to Phosphothreonine. Phosphoserine is present on serine 53.

This sequence belongs to the CENP-L/IML3 family. As to quaternary structure, component of the CENPA-CAD complex, composed of CENPI, CENPK, CENPL, CENPO, CENPP, CENPQ, CENPR and CENPS. The CENPA-CAD complex interacts with the CENPA-NAC complex, at least composed of CENPA, CENPC, CENPH, CENPM, CENPN, CENPT and CENPU.

The protein resides in the nucleus. It is found in the chromosome. Its subcellular location is the centromere. Its function is as follows. Component of the CENPA-CAD (nucleosome distal) complex, a complex recruited to centromeres which is involved in assembly of kinetochore proteins, mitotic progression and chromosome segregation. May be involved in incorporation of newly synthesized CENPA into centromeres via its interaction with the CENPA-NAC complex. The polypeptide is Centromere protein L (CENPL) (Homo sapiens (Human)).